The chain runs to 298 residues: GTPase Era (298 aa).

Residues 3-170 form the Era-type G domain; sequence KSGFVAILGR…IKLLTDNLEE (168 aa). Residues 11–18 are G1; that stretch reads GRPNVGKS. 11–18 lines the GTP pocket; that stretch reads GRPNVGKS. The interval 37 to 41 is G2; the sequence is QTTRN. The G3 stretch occupies residues 58-61; it reads DTPG. Residues 58-62 and 120-123 each bind GTP; these read DTPGI and NKID. Positions 120–123 are G4; that stretch reads NKID. Positions 149 to 151 are G5; that stretch reads ISA. The 79-residue stretch at 201–279 folds into the KH type-2 domain; it reads TQQEVPHSVA…YLETWVKVKK (79 aa).

This sequence belongs to the TRAFAC class TrmE-Era-EngA-EngB-Septin-like GTPase superfamily. Era GTPase family. In terms of assembly, monomer.

Its subcellular location is the cytoplasm. The protein resides in the cell membrane. Functionally, an essential GTPase that binds both GDP and GTP, with rapid nucleotide exchange. Plays a role in 16S rRNA processing and 30S ribosomal subunit biogenesis and possibly also in cell cycle regulation and energy metabolism. The protein is GTPase Era of Streptococcus pyogenes serotype M3 (strain ATCC BAA-595 / MGAS315).